A 357-amino-acid chain; its full sequence is Protein MGF 360-14L (357 aa).

This sequence belongs to the asfivirus MGF 360 family. In terms of assembly, interacts with host IRF3 and TRIM21; these interactions mediates degradation of IRF3 through TRIM21 and ubiquitin-meditated proteolysis.

It localises to the host cytoplasm. In terms of biological role, plays a role in virus cell tropism, and may be required for efficient virus replication in macrophages. Also inhibits the host cGAS/STING-mediated type I interferon production by inducing host IRF3 degradation through the proteasome pathway. The polypeptide is Protein MGF 360-14L (Ornithodoros (relapsing fever ticks)).